We begin with the raw amino-acid sequence, 337 residues long: Casein kinase II subunit alpha (337 aa).

Residues 47–332 enclose the Protein kinase domain; it reads YEIIRKIGRG…TREAMEHPYF (286 aa). ATP contacts are provided by residues 53 to 61 and K76; that span reads IGRGKYSEV. The active-site Proton acceptor is the D164.

It belongs to the protein kinase superfamily. CMGC Ser/Thr protein kinase family. CK2 subfamily. Tetramer of two alpha and two beta chains.

It catalyses the reaction L-seryl-[protein] + ATP = O-phospho-L-seryl-[protein] + ADP + H(+). The enzyme catalyses L-threonyl-[protein] + ATP = O-phospho-L-threonyl-[protein] + ADP + H(+). Its function is as follows. Casein kinases are operationally defined by their preferential utilization of acidic proteins such as caseins as substrates. The alpha chain contains the catalytic site. This chain is Casein kinase II subunit alpha (casK), found in Dictyostelium discoideum (Social amoeba).